Consider the following 128-residue polypeptide: Fluoride-specific ion channel FluC (128 aa).

4 helical membrane passes run 2–22 (FYSI…RWCL), 35–55 (LGTL…AVVF), 67–87 (LFVI…SVEV), and 96–116 (FGWA…LTAL). Residues G75 and T78 each coordinate Na(+).

The protein belongs to the fluoride channel Fluc/FEX (TC 1.A.43) family.

Its subcellular location is the cell inner membrane. The catalysed reaction is fluoride(in) = fluoride(out). Na(+) is not transported, but it plays an essential structural role and its presence is essential for fluoride channel function. Its function is as follows. Fluoride-specific ion channel. Important for reducing fluoride concentration in the cell, thus reducing its toxicity. The polypeptide is Fluoride-specific ion channel FluC (Burkholderia cenocepacia (strain ATCC BAA-245 / DSM 16553 / LMG 16656 / NCTC 13227 / J2315 / CF5610) (Burkholderia cepacia (strain J2315))).